Reading from the N-terminus, the 987-residue chain is Nuclear matrix constituent protein 1b (987 aa).

Residues 1–25 (MASPRSAGGVGGGGGGGGGSGGAAA) are disordered. Residues 8–24 (GGVGGGGGGGGGSGGAA) are compositionally biased toward gly residues. 2 coiled-coil regions span residues 403-545 (LAEL…ERRA) and 594-717 (LSKI…DREA). Composition is skewed to basic and acidic residues over residues 752-764 (SDIN…HDNS) and 898-908 (CKEHEYGDKGP). Disordered regions lie at residues 752-775 (SDIN…FGRK) and 887-987 (HDEA…FLIT). Polar residues predominate over residues 944-954 (ATVSATETSNV). The segment covering 956-973 (GPEDNNDSDEEDEEEEEE) has biased composition (acidic residues).

The protein belongs to the CRWN family. In terms of assembly, interacts with SWI3C.

It localises to the nucleus matrix. It is found in the nucleus lamina. In terms of biological role, architectural component of nuclear structure that plays different roles in controlling nuclear size and morphology. Involved in the modification of chromatin accessibility by interacting with SWI3C, a component of the chromatin-remodeling complex, to thus reduce the suppression effect of the complex. Acts as positive regulator of drought resistance and modulates root growth. Positively regulates the expression of genes related to root growth and drought resistance. This chain is Nuclear matrix constituent protein 1b, found in Oryza sativa subsp. japonica (Rice).